Reading from the N-terminus, the 582-residue chain is Mitogen-activated protein kinase 17 (582 aa).

Positions 22-61 (SSSFHLTTTGDDTVKDLHDPRREDAEGDGWEEVHEGPESD) are disordered. The segment covering 33–45 (DTVKDLHDPRRED) has biased composition (basic and acidic residues). Residues 105 to 396 (YKVSEVIGKG…AEEALTDPYF (292 aa)) enclose the Protein kinase domain. ATP contacts are provided by residues 111 to 119 (IGKGSYGVV) and Lys-134. The Proton acceptor role is filled by Asp-231. At Thr-267 the chain carries Phosphothreonine. A TXY motif is present at residues 267 to 269 (TDY). A Phosphotyrosine modification is found at Tyr-269. 2 disordered regions span residues 474–502 (EGVS…GNKH) and 542–582 (ISAS…QLKT). A compositionally biased stretch (polar residues) spans 482-491 (SSPQLRQNAS). Positions 493-502 (PRERAIGNKH) are enriched in basic and acidic residues. The segment covering 557–572 (DQEDSLTESMDETADE) has biased composition (acidic residues).

Belongs to the protein kinase superfamily. CMGC Ser/Thr protein kinase family. MAP kinase subfamily. Post-translationally, dually phosphorylated on Thr-267 and Tyr-269, which activates the enzyme.

The enzyme catalyses L-seryl-[protein] + ATP = O-phospho-L-seryl-[protein] + ADP + H(+). It catalyses the reaction L-threonyl-[protein] + ATP = O-phospho-L-threonyl-[protein] + ADP + H(+). With respect to regulation, activated by threonine and tyrosine phosphorylation. The chain is Mitogen-activated protein kinase 17 (MPK17) from Oryza sativa subsp. japonica (Rice).